The sequence spans 278 residues: Undecaprenyl-diphosphatase (278 aa).

The next 6 helical transmembrane spans lie at 44–64, 84–104, 112–132, 187–207, 224–244, and 254–274; these read FLEMFNIVIQLGAILAVMTIY, WQLWAKVVIACIPSILIAVPL, FNFMVPIAIALIVYGIAFIWI, SVAADFTFFLGIPTMFGYSGL, VWILLVASVTAYLVSLVVIRF, and FTVFGYYRIILGAILLVYAFI.

Belongs to the UppP family.

The protein resides in the cell membrane. It catalyses the reaction di-trans,octa-cis-undecaprenyl diphosphate + H2O = di-trans,octa-cis-undecaprenyl phosphate + phosphate + H(+). Catalyzes the dephosphorylation of undecaprenyl diphosphate (UPP). Confers resistance to bacitracin. The polypeptide is Undecaprenyl-diphosphatase (Streptococcus suis (strain 98HAH33)).